Consider the following 559-residue polypeptide: Potassium-transporting ATPase potassium-binding subunit (559 aa).

12 consecutive transmembrane segments (helical) span residues Gly5–Thr25, Leu63–Leu83, Val131–Leu151, Ile173–Gly193, Val254–Val274, Ala282–Glu302, Phe327–Val347, Ala356–Val376, Gly379–Gly399, Met416–Met436, Leu483–Ile503, and Ala525–Pro545.

It belongs to the KdpA family. The system is composed of three essential subunits: KdpA, KdpB and KdpC.

The protein localises to the cell inner membrane. Its function is as follows. Part of the high-affinity ATP-driven potassium transport (or Kdp) system, which catalyzes the hydrolysis of ATP coupled with the electrogenic transport of potassium into the cytoplasm. This subunit binds the periplasmic potassium ions and delivers the ions to the membrane domain of KdpB through an intramembrane tunnel. This Klebsiella pneumoniae (strain 342) protein is Potassium-transporting ATPase potassium-binding subunit.